Reading from the N-terminus, the 1574-residue chain is RNA2 polyprotein (1574 aa).

Residues 361–422 adopt a coiled-coil conformation; sequence ERVKAFSSHH…ERLRAAKEDR (62 aa). 2 disordered regions span residues 557 to 579 and 863 to 916; these read PPPI…ETPG and RSAT…RGYT.

Specific enzymatic cleavages by RNA1 encoded picornain 3C-like protease in vivo yield mature proteins.

The protein localises to the host cell junction. It localises to the host plasmodesma. The protein resides in the virion. Functionally, transports viral genome to neighboring plant cells directly through plasmosdesmata, without any budding. The movement protein allows efficient cell to cell propagation, by bypassing the host cell wall barrier. Acts by forming a tubular structure at the host plasmodesmata, enlarging it enough to allow free passage of virion capsids. In terms of biological role, capsid proteins form a capsid enclosing the viral positive strand RNA genome. Together they form an icosahedral capsid pseudo T=3 with a diameter of approximately 30 nm (Potential). The protein is RNA2 polyprotein of Citrus unshiu (Satsuma mandarin).